We begin with the raw amino-acid sequence, 355 residues long: 3-dehydroquinate synthase (355 aa).

Residues 67–72 (DGEIYK), 101–105 (GVIGD), 125–126 (TT), K138, K147, and 165–168 (FLNT) each bind NAD(+). Zn(2+) contacts are provided by E180, H243, and H260.

It belongs to the sugar phosphate cyclases superfamily. Dehydroquinate synthase family. The cofactor is NAD(+). Co(2+) serves as cofactor. Zn(2+) is required as a cofactor.

It localises to the cytoplasm. It carries out the reaction 7-phospho-2-dehydro-3-deoxy-D-arabino-heptonate = 3-dehydroquinate + phosphate. Its pathway is metabolic intermediate biosynthesis; chorismate biosynthesis; chorismate from D-erythrose 4-phosphate and phosphoenolpyruvate: step 2/7. In terms of biological role, catalyzes the conversion of 3-deoxy-D-arabino-heptulosonate 7-phosphate (DAHP) to dehydroquinate (DHQ). In Buchnera aphidicola subsp. Baizongia pistaciae (strain Bp), this protein is 3-dehydroquinate synthase.